A 305-amino-acid chain; its full sequence is Putative lipid kinase SAR0780 (305 aa).

The 137-residue stretch at 3-139 (NKYTHGVLFY…YDVIKINNQY (137 aa)) folds into the DAGKc domain. ATP contacts are provided by residues S44, 74 to 80 (GDGTVNE), and T101. The Mg(2+) site is built by S220, D223, and E225. Catalysis depends on E281, which acts as the Proton acceptor.

The protein belongs to the diacylglycerol/lipid kinase family. Requires Mg(2+) as cofactor.

Its function is as follows. May catalyze the ATP-dependent phosphorylation of lipids other than diacylglycerol (DAG). In fact, is not able to exhibit diacylglycerol kinase activity in vitro. In Staphylococcus aureus (strain MRSA252), this protein is Putative lipid kinase SAR0780.